The primary structure comprises 140 residues: Translation initiation factor 2 subunit beta (140 aa).

This sequence belongs to the eIF-2-beta/eIF-5 family. As to quaternary structure, heterotrimer composed of an alpha, a beta and a gamma chain.

In terms of biological role, eIF-2 functions in the early steps of protein synthesis by forming a ternary complex with GTP and initiator tRNA. The sequence is that of Translation initiation factor 2 subunit beta from Metallosphaera sedula (strain ATCC 51363 / DSM 5348 / JCM 9185 / NBRC 15509 / TH2).